The sequence spans 107 residues: Small ribosomal subunit protein uS15 (107 aa).

An N6-acetyllysine; alternate modification is found at K27. At K27 the chain carries N6-succinyllysine; alternate. A Glycyl lysine isopeptide (Lys-Gly) (interchain with G-Cter in ubiquitin) cross-link involves residue K27. Residue S30 is modified to Phosphoserine. K34 is modified (N6-succinyllysine). Y38 carries the post-translational modification Phosphotyrosine. Residue K43 forms a Glycyl lysine isopeptide (Lys-Gly) (interchain with G-Cter in SUMO2) linkage.

The protein belongs to the universal ribosomal protein uS15 family. Component of the small ribosomal subunit. Part of the small subunit (SSU) processome, composed of more than 70 proteins and the RNA chaperone small nucleolar RNA (snoRNA) U3. In terms of processing, ubiquitinated at Lys-27 by RNF14 and RNF25 in response to ribosome collisions (ribosome stalling).

Its subcellular location is the cytoplasm. It localises to the nucleus. It is found in the nucleolus. Its function is as follows. Component of the small ribosomal subunit. The ribosome is a large ribonucleoprotein complex responsible for the synthesis of proteins in the cell. Part of the small subunit (SSU) processome, first precursor of the small eukaryotic ribosomal subunit. During the assembly of the SSU processome in the nucleolus, many ribosome biogenesis factors, an RNA chaperone and ribosomal proteins associate with the nascent pre-rRNA and work in concert to generate RNA folding, modifications, rearrangements and cleavage as well as targeted degradation of pre-ribosomal RNA by the RNA exosome. The polypeptide is Small ribosomal subunit protein uS15 (RPS13) (Sus scrofa (Pig)).